The following is a 340-amino-acid chain: Diacylglycerol acyltransferase/mycolyltransferase Ag85C (340 aa).

The signal sequence occupies residues 1-45 (MTFFEQVRRLRSAATTLPRRLAIAAMGAVLVYGLVGTFGGPATAG). 86-87 (LR) provides a ligand contact to substrate. Residues 102–112 (FEEYYQSGLSV) are fibronectin-binding. Positions 170 and 198 each coordinate substrate. S170 acts as the Nucleophile in catalysis. E274 is an active-site residue. Residues 276–279 (LTLR) and 306–308 (HSW) contribute to the substrate site. H306 is a catalytic residue.

It belongs to the mycobacterial A85 antigen family. As to quaternary structure, homodimer.

Its subcellular location is the secreted. The catalysed reaction is an acyl-CoA + a 1,2-diacyl-sn-glycerol = a triacyl-sn-glycerol + CoA. It catalyses the reaction 2 alpha,alpha'-trehalose 6-mycolate = alpha,alpha'-trehalose 6,6'-bismycolate + alpha,alpha-trehalose. Functionally, the antigen 85 proteins (FbpA, FbpB, FbpC) are responsible for the high affinity of mycobacteria to fibronectin, a large adhesive glycoprotein, which facilitates the attachment of M.tuberculosis to murine alveolar macrophages (AMs). They also help to maintain the integrity of the cell wall by catalyzing the transfer of mycolic acids to cell wall arabinogalactan and through the synthesis of alpha,alpha-trehalose dimycolate (TDM, cord factor). They catalyze the transfer of a mycoloyl residue from one molecule of alpha,alpha-trehalose monomycolate (TMM) to another TMM, leading to the formation of TDM. In Mycobacterium bovis (strain ATCC BAA-935 / AF2122/97), this protein is Diacylglycerol acyltransferase/mycolyltransferase Ag85C (fbpC).